The sequence spans 175 residues: MAPLGPTGPLPQSFLLKCLEQMRKVQADGTALQETLCATHQLCHPEELVLLGHALGIPQPPLSSCSSQALQLMGCLRQLHSGLFLYQGLLQALAGISPELAPTLDTLQLDTTDFAINIWQQMEDLGMAPAVPPTQGTMPAFTSAFQRRAGGVLVASNLQSFLELAYRALRHFAKP.

Intrachain disulfides connect Cys-37-Cys-43 and Cys-65-Cys-75. Thr-134 is a glycosylation site (O-linked (GalNAc...) threonine).

This sequence belongs to the IL-6 superfamily. Monomer. In terms of processing, O-glycosylated.

The protein resides in the secreted. Functionally, granulocyte/macrophage colony-stimulating factors are cytokines that act in hematopoiesis by controlling the production, differentiation, and function of 2 related white cell populations of the blood, the granulocytes and the monocytes-macrophages. This CSF induces granulocytes. The protein is Granulocyte colony-stimulating factor (CSF3) of Canis lupus familiaris (Dog).